Here is a 519-residue protein sequence, read N- to C-terminus: Putative tyrosine carboxypeptidase MATCAP2 (519 aa).

The segment at 63–103 (SKEEKKHRSQKRFSSASSKQHRKPSKSPSSSHSKDPSRMTA) is disordered. Histidine 330 contacts Zn(2+). Glutamate 331 (nucleophile) is an active-site residue. Zn(2+) is bound by residues histidine 335 and glutamate 366.

Zn(2+) is required as a cofactor.

In terms of biological role, putative tyrosine carboxypeptidase. This chain is Putative tyrosine carboxypeptidase MATCAP2, found in Mus musculus (Mouse).